The sequence spans 217 residues: Imidazole glycerol phosphate synthase subunit HisH (217 aa).

Residues 6–214 form the Glutamine amidotransferase type-1 domain; it reads QIAVVDYDMG…VTQVAAAQLQ (209 aa). Catalysis depends on Cys-84, which acts as the Nucleophile. Catalysis depends on residues His-189 and Glu-191.

In terms of assembly, heterodimer of HisH and HisF.

Its subcellular location is the cytoplasm. The catalysed reaction is 5-[(5-phospho-1-deoxy-D-ribulos-1-ylimino)methylamino]-1-(5-phospho-beta-D-ribosyl)imidazole-4-carboxamide + L-glutamine = D-erythro-1-(imidazol-4-yl)glycerol 3-phosphate + 5-amino-1-(5-phospho-beta-D-ribosyl)imidazole-4-carboxamide + L-glutamate + H(+). The enzyme catalyses L-glutamine + H2O = L-glutamate + NH4(+). It functions in the pathway amino-acid biosynthesis; L-histidine biosynthesis; L-histidine from 5-phospho-alpha-D-ribose 1-diphosphate: step 5/9. In terms of biological role, IGPS catalyzes the conversion of PRFAR and glutamine to IGP, AICAR and glutamate. The HisH subunit catalyzes the hydrolysis of glutamine to glutamate and ammonia as part of the synthesis of IGP and AICAR. The resulting ammonia molecule is channeled to the active site of HisF. The sequence is that of Imidazole glycerol phosphate synthase subunit HisH from Synechococcus sp. (strain ATCC 27144 / PCC 6301 / SAUG 1402/1) (Anacystis nidulans).